Reading from the N-terminus, the 65-residue chain is Metallothionein-like protein type 3 (65 aa).

This sequence belongs to the metallothionein superfamily. Type 15 family.

Its function is as follows. Metallothioneins have a high content of cysteine residues that bind various heavy metals. This Musa acuminata (Banana) protein is Metallothionein-like protein type 3.